A 699-amino-acid polypeptide reads, in one-letter code: Glycine--tRNA ligase beta subunit (699 aa).

Belongs to the class-II aminoacyl-tRNA synthetase family. In terms of assembly, tetramer of two alpha and two beta subunits.

It localises to the cytoplasm. The enzyme catalyses tRNA(Gly) + glycine + ATP = glycyl-tRNA(Gly) + AMP + diphosphate. The polypeptide is Glycine--tRNA ligase beta subunit (Methylobacterium radiotolerans (strain ATCC 27329 / DSM 1819 / JCM 2831 / NBRC 15690 / NCIMB 10815 / 0-1)).